The chain runs to 640 residues: Spindle assembly abnormal protein 6 homolog (640 aa).

Residues 40–92 (VHKKDLAVRLTDDADPFFLYNLVISEEDFQSLKSQQGLLVDFSAFPQKFIDLL) form the PISA domain. Residues 154 to 475 (LARCLKCLKE…KQLLKTNENV (322 aa)) are a coiled coil.

In terms of assembly, nine homodimers form a cartwheel structure with an internal diameter of 23 nM and radial spokes connecting to the microtubule triplets.

It is found in the cytoplasm. It localises to the cytoskeleton. The protein localises to the microtubule organizing center. Its subcellular location is the centrosome. In terms of biological role, central scaffolding component of the centrioles ensuring their 9-fold symmetry. Required for centrosome biogenesis and duplication: required both for mother-centriole-dependent centriole duplication and deuterosome-dependent centriole amplification in multiciliated cells. The sequence is that of Spindle assembly abnormal protein 6 homolog (SASS6) from Gallus gallus (Chicken).